Consider the following 322-residue polypeptide: Replication factor C small subunit (322 aa).

ATP is bound at residue 50-57 (GPAGTGKT).

This sequence belongs to the activator 1 small subunits family. RfcS subfamily. Heteromultimer composed of small subunits (RfcS) and large subunits (RfcL).

Its function is as follows. Part of the RFC clamp loader complex which loads the PCNA sliding clamp onto DNA. In Halobacterium salinarum (strain ATCC 700922 / JCM 11081 / NRC-1) (Halobacterium halobium), this protein is Replication factor C small subunit.